A 142-amino-acid polypeptide reads, in one-letter code: Putative pre-16S rRNA nuclease (142 aa).

The protein belongs to the YqgF nuclease family.

The protein resides in the cytoplasm. In terms of biological role, could be a nuclease involved in processing of the 5'-end of pre-16S rRNA. This Blochmanniella floridana protein is Putative pre-16S rRNA nuclease.